A 376-amino-acid polypeptide reads, in one-letter code: MLITSNAKTQLEDTLAKMAEAAELDKTRWSRLNTAYEAISKWLSDDPEFFGGVEIEIYPQGSVSIGTTTKPYGKTEFDLDVVIHIKLLSSNYDPKTIFNEVVRRLNENETYRKICEPKSRCVRLNYQGDFHLDVVPGCMVIIYNHELIDITDQKNEIWLRSSPKGYQKWFLDIANRVELTLLEMTFSAHKVEIEEYAKKKPLQRAVQLIKMRRNIYFDQNPENAPTSIILTTLAAQFYEGQSSISETFEGIISKLKNHIETLFPNRPFELPNPVNPSENLADIWVDKPELYKHFISFINNLHNEWQDLKKAHGIEEEAILMKGMFGNDPYIKAMEARAETVNQKRGNGLGILATGVMVDRAVEKSLPVMPNTFYGD.

It belongs to the CD-NTase family. G05 subfamily.

It carries out the reaction 2 GTP = 3',3'-c-di-GMP + 2 diphosphate. Cyclic nucleotide synthase (second messenger synthase) of a CBASS antivirus system. CBASS (cyclic oligonucleotide-based antiphage signaling system) provides immunity against bacteriophage. The CD-NTase protein synthesizes cyclic nucleotides in response to infection; these serve as specific second messenger signals. The signals activate a diverse range of effectors, leading to bacterial cell death and thus abortive phage infection. A type I-D CBASS(GG) system. Functionally, cyclic dinucleotide synthase that catalyzes the synthesis of c-di-GMP, has no activity with other NTP substrates. This chain is c-di-GMP synthase, found in Roseivirga ehrenbergii (strain DSM 102268 / JCM 13514 / KCTC 12282 / NCIMB 14502 / KMM 6017).